Consider the following 578-residue polypeptide: Pentatricopeptide repeat-containing protein At4g22760 (578 aa).

PPR repeat units follow at residues 68–102, 103–137, 138–168, 169–203, 204–230, 231–261, 262–292, 293–327, 330–364, 365–395, 396–430, 431–465, and 466–496; these read DSFS…GIPP, SSHA…GLCG, CVYV…IAEK, NTVS…DAVS, WNLI…MPLK, SPAS…MPQK, NGVS…MSKK, DKLV…NSYI, DEIT…GIKI, DDLL…LNKK, DTVS…KIPP, NVVT…NLEP, and SADH…MPMQ. The interval 501–576 is type E motif; it reads VWGALLLASG…TLGCSWVEGS (76 aa).

Belongs to the PPR family. PCMP-E subfamily.

The polypeptide is Pentatricopeptide repeat-containing protein At4g22760 (PCMP-E6) (Arabidopsis thaliana (Mouse-ear cress)).